The following is a 375-amino-acid chain: Succinyl-diaminopimelate desuccinylase (375 aa).

Residue H66 participates in Zn(2+) binding. Residue D68 is part of the active site. D99 contributes to the Zn(2+) binding site. E133 serves as the catalytic Proton acceptor. Residues E134, E162, and H348 each contribute to the Zn(2+) site.

This sequence belongs to the peptidase M20A family. DapE subfamily. Homodimer. It depends on Zn(2+) as a cofactor. Co(2+) is required as a cofactor.

It catalyses the reaction N-succinyl-(2S,6S)-2,6-diaminopimelate + H2O = (2S,6S)-2,6-diaminopimelate + succinate. It functions in the pathway amino-acid biosynthesis; L-lysine biosynthesis via DAP pathway; LL-2,6-diaminopimelate from (S)-tetrahydrodipicolinate (succinylase route): step 3/3. Functionally, catalyzes the hydrolysis of N-succinyl-L,L-diaminopimelic acid (SDAP), forming succinate and LL-2,6-diaminopimelate (DAP), an intermediate involved in the bacterial biosynthesis of lysine and meso-diaminopimelic acid, an essential component of bacterial cell walls. In Serratia proteamaculans (strain 568), this protein is Succinyl-diaminopimelate desuccinylase.